We begin with the raw amino-acid sequence, 111 residues long: Mitochondrial import inner membrane translocase subunit TIM14 (111 aa).

Over 1–3 the chain is Mitochondrial intermembrane; that stretch reads MTG. Residues 4–24 traverse the membrane as a helical segment; that stretch reads GLIAAGLGLAAVGFGARYVLR. The Mitochondrial matrix segment spans residues 25 to 111; the sequence is NQALIKKGME…AKDLMESTKS (87 aa). The J domain maps to 58 to 111; the sequence is EAAKILGITPSAKPAKIKDAHKKVMIVNHPDRGGSPYLAAKINEAKDLMESTKS.

It belongs to the TIM14 family. In terms of assembly, probable component of the PAM complex at least composed of a mitochondrial HSP70 protein, GrpE, tim-44, tim-16 and tim-14.

Its subcellular location is the mitochondrion inner membrane. Its function is as follows. Probable component of the PAM complex, a complex required for the translocation of transit peptide-containing proteins from the inner membrane into the mitochondrial matrix in an ATP-dependent manner. May act as a co-chaperone that stimulate the ATP-dependent activity. The sequence is that of Mitochondrial import inner membrane translocase subunit TIM14 (dnj-21) from Caenorhabditis briggsae.